Consider the following 78-residue polypeptide: Large ribosomal subunit protein bL28 (78 aa).

Belongs to the bacterial ribosomal protein bL28 family.

This chain is Large ribosomal subunit protein bL28, found in Nostoc sp. (strain PCC 7120 / SAG 25.82 / UTEX 2576).